The primary structure comprises 633 residues: Endosomal/prevacuolar sodium/hydrogen exchanger (633 aa).

The first 21 residues, Met1 to Ala21, serve as a signal peptide directing secretion. Over Val22–Ser61 the chain is Lumenal. The tract at residues Asp25–Ala44 is disordered. Residues Leu31–Pro42 are compositionally biased toward low complexity. Residues Trp62–Thr82 form a helical membrane-spanning segment. The Cytoplasmic portion of the chain corresponds to Gln83 to Arg85. Residues Ile86–Ile106 traverse the membrane as a helical segment. The Lumenal segment spans residues Arg107–Thr117. The helical transmembrane segment at Val118–Gly138 threads the bilayer. The Amiloride-binding signature appears at Tyr124 to Ile133. Over Tyr139 to Ser152 the chain is Cytoplasmic. Residues Ile153–Tyr173 traverse the membrane as a helical segment. At Ile174–Asp189 the chain is on the lumenal side. The helical transmembrane segment at Ala190–Ala211 threads the bilayer. Topologically, residues Tyr212–Lys217 are cytoplasmic. A helical transmembrane segment spans residues Leu218–Glu238. At Thr239–Gly258 the chain is on the lumenal side. A helical membrane pass occupies residues Leu259–Ala279. Residues Leu280–Arg288 lie on the Cytoplasmic side of the membrane. A helical transmembrane segment spans residues Arg289–Phe308. At Ser309–His313 the chain is on the lumenal side. A helical membrane pass occupies residues Met314–Tyr333. At Asn334–Lys344 the chain is on the cytoplasmic side. A helical membrane pass occupies residues Tyr345–Leu364. Over Glu365–Pro376 the chain is Cytoplasmic. A helical membrane pass occupies residues Leu377–Leu397. Over Ser398–Tyr431 the chain is Lumenal. The N-linked (GlcNAc...) asparagine glycan is linked to Asn420. A helical membrane pass occupies residues Gln432–Ile452. Over Gln453–Lys457 the chain is Cytoplasmic. The chain crosses the membrane as a helical span at residues Phe458 to Thr478. Residue Thr490 is modified to Phosphothreonine. Ser494 is subject to Phosphoserine. At Thr498 the chain carries Phosphothreonine. The residue at position 499 (Ser499) is a Phosphoserine. N-linked (GlcNAc...) asparagine glycosylation is found at Asn515, Asn550, and Asn563. Positions Thr553 to Asp578 are disordered. The span at Glu564–Arg574 shows a compositional bias: polar residues. Ser569 bears the Phosphoserine mark.

Belongs to the monovalent cation:proton antiporter 1 (CPA1) transporter (TC 2.A.36) family. In terms of assembly, interacts with CYP6.

It localises to the endosome membrane. Its subcellular location is the prevacuolar compartment membrane. Its function is as follows. Endosomal/prevacuolar electroneutral Na(+)/H(+) exchanger which mediates intracellular sequestration of Na(+) cations, regulates vacuolar pH and contributes to osmotolerance following sudden exposure to hyperosmotic media. Also contributes to the postdiauxic/stationary phase resistance to osmotic stress and allows for the continued growth of cells until the acquired osmotolerance response can occur. Involved in hygromycin resistance probably through its influence on the electrochemical proton gradient affecting secondarily the entrance of hygromycin. Mediates pH-dependent vesicle trafficking out of the endosome. Contributes to K(+) sequestration and homeostasis. This Saccharomyces cerevisiae (strain ATCC 204508 / S288c) (Baker's yeast) protein is Endosomal/prevacuolar sodium/hydrogen exchanger (NHX1).